The following is a 708-amino-acid chain: Glycogen [starch] synthase isoform 1 (708 aa).

Arg20 contributes to the UDP binding site. A Phosphoserine modification is found at Ser159. 2 residues coordinate UDP-alpha-D-glucose: His193 and Arg199. His280, Glu281, Gln283, His286, and Lys290 together coordinate alpha-D-glucose 6-phosphate. Arg320 lines the UDP pocket. Position 320 (Arg320) interacts with UDP-alpha-D-glucose. Ser363 carries the post-translational modification Phosphoserine. His500 is an alpha-D-glucose 6-phosphate binding site. UDP-alpha-D-glucose-binding residues include Glu509, Trp511, and Gly512. UDP is bound at residue Thr514. Ser560 bears the Phosphoserine mark. Residues Arg583 and Arg587 each contribute to the alpha-D-glucose 6-phosphate site. Residues Ser651 and Ser655 each carry the phosphoserine modification. Phosphoserine; by PKA occurs at positions 660 and 662. Residues Ser687–Asn708 form a disordered region. A compositionally biased stretch (acidic residues) spans Asp693 to Asn708.

This sequence belongs to the glycosyltransferase 3 family.

The catalysed reaction is [(1-&gt;4)-alpha-D-glucosyl](n) + UDP-alpha-D-glucose = [(1-&gt;4)-alpha-D-glucosyl](n+1) + UDP + H(+). Its pathway is glycan biosynthesis; glycogen biosynthesis. Its activity is regulated as follows. Allosteric activation by glucose-6-phosphate, and phosphorylation by a cAMP-dependent kinase. Glycogen synthase participates in the glycogen biosynthetic process along with glycogenin and glycogen branching enzyme. Extends the primer composed of a few glucose units formed by glycogenin by adding new glucose units to it. In this context, glycogen synthase transfers the glycosyl residue from UDP-Glc to the non-reducing end of alpha-1,4-glucan. This Saccharomyces cerevisiae (strain ATCC 204508 / S288c) (Baker's yeast) protein is Glycogen [starch] synthase isoform 1 (GSY1).